The primary structure comprises 502 residues: ATP synthase subunit alpha (502 aa).

Residue 169-176 (GDRQTGKT) participates in ATP binding.

This sequence belongs to the ATPase alpha/beta chains family. As to quaternary structure, F-type ATPases have 2 components, CF(1) - the catalytic core - and CF(0) - the membrane proton channel. CF(1) has five subunits: alpha(3), beta(3), gamma(1), delta(1), epsilon(1). CF(0) has three main subunits: a(1), b(2) and c(9-12). The alpha and beta chains form an alternating ring which encloses part of the gamma chain. CF(1) is attached to CF(0) by a central stalk formed by the gamma and epsilon chains, while a peripheral stalk is formed by the delta and b chains.

The protein resides in the cell membrane. The catalysed reaction is ATP + H2O + 4 H(+)(in) = ADP + phosphate + 5 H(+)(out). Produces ATP from ADP in the presence of a proton gradient across the membrane. The alpha chain is a regulatory subunit. The polypeptide is ATP synthase subunit alpha (Desulfitobacterium hafniense (strain Y51)).